We begin with the raw amino-acid sequence, 354 residues long: Uroporphyrinogen decarboxylase (354 aa).

Residues 27–31, Phe-46, Asp-77, Tyr-154, Thr-209, and His-327 each bind substrate; that span reads RRAGR.

This sequence belongs to the uroporphyrinogen decarboxylase family. Homodimer.

The protein resides in the cytoplasm. The catalysed reaction is uroporphyrinogen III + 4 H(+) = coproporphyrinogen III + 4 CO2. It participates in porphyrin-containing compound metabolism; protoporphyrin-IX biosynthesis; coproporphyrinogen-III from 5-aminolevulinate: step 4/4. Functionally, catalyzes the decarboxylation of four acetate groups of uroporphyrinogen-III to yield coproporphyrinogen-III. This is Uroporphyrinogen decarboxylase from Salmonella typhimurium (strain LT2 / SGSC1412 / ATCC 700720).